The primary structure comprises 369 residues: Transmembrane protein 144 homolog A (369 aa).

The next 10 membrane-spanning stretches (helical) occupy residues Val-6–Val-26, Leu-35–Ile-55, Pro-63–Ile-83, Leu-85–Phe-105, Asp-122–Ile-142, Val-221–Met-241, Ile-256–Ala-276, Thr-288–Ile-308, Gly-318–Phe-338, and Leu-347–Ser-367.

It belongs to the TMEM144 family.

The protein localises to the membrane. The polypeptide is Transmembrane protein 144 homolog A (tmem144A) (Dictyostelium discoideum (Social amoeba)).